Reading from the N-terminus, the 585-residue chain is MRGLKDELLKAIWHAFTALDLDRSGKVSKSQLKVLSHNLCTVLKVPHDPVALEEHFRDDDEGPVSNQGYMPYLNKFILEKVQDNFDKIEFNRMCWTLCVKKNLTKSPLLITEDDAFKVWVIFNFLSEDKYPLIIVPEEIEYLLKKLTEAMGGGWQQEQFEHYKINFDDNKDGLSAWELIELIGNGQFSKGMDRQTVSMAINEVFNELILDVLKQGYMMKKGHKRKNWTERWFVLKPNIISYYVSEDLKDKKGDILLDENCCVESLPDKDGKKCLFLIKCFDKTFEISASDKKKKQEWIQAIYSTIHLLKLGSPPPHKEARQRRKELRRKLLAEQEELERQMKELQAANENKQQELESVRKKLEEAASRAADEEKKRLQTQVELQTRFSTELEREKLIRQQMEEQVAQKSSELEQYLQRVRELEDMYLKLQEALEDERQARQDEETVRKLQARLLEEESSKRAELEKWHLEQQQAIQTTEAEKQELEQQRVMKEQALQEAMAQLEQLELERKQALEQYEGVKKKLEMATHMTKSWKDKVAHHEGLIRLIEPGSKNPHLITNWGPAAFTQAELEEREKSWKEKKTTE.

Positions 210-306 (DVLKQGYMMK…WIQAIYSTIH (97 aa)) constitute a PH domain. Residues 316 to 529 (HKEARQRRKE…VKKKLEMATH (214 aa)) are a coiled coil. The segment at 347–373 (ANENKQQELESVRKKLEEAASRAADEE) is disordered. Basic and acidic residues predominate over residues 351–373 (KQQELESVRKKLEEAASRAADEE).

In terms of assembly, the SWAP complex consists of NPM1, NCL, PARP1 and SWAP70. Tyrosine-phosphorylated. Spleen. Expressed only in B-cells that have been induced to switch to various Ig isotypes.

It localises to the cytoplasm. The protein localises to the cell membrane. It is found in the nucleus. Its subcellular location is the cell projection. The protein resides in the lamellipodium. It localises to the cytoskeleton. In terms of biological role, phosphatidylinositol 3,4,5-trisphosphate-dependent guanine nucleotide exchange factor (GEF) which, independently of RAS, transduces signals from tyrosine kinase receptors to RAC. It also mediates signaling of membrane ruffling. Regulates the actin cytoskeleton as an effector or adapter protein in response to agonist stimulated phosphatidylinositol (3,4)-bisphosphate production and cell protrusion. This is Switch-associated protein 70 (Swap70) from Mus musculus (Mouse).